A 526-amino-acid chain; its full sequence is Carotenoid cleavage oxygenase 1 (526 aa).

Positions 1–33 are disordered; that stretch reads MAEYVFSDAPKDSHGNGVKDAVPGKQPEELPPA. Residues Tyr-133 and Lys-164 each coordinate piceatannol. Trans-resveratrol contacts are provided by Tyr-133 and Lys-164. Residues His-197, His-248, and His-313 each contribute to the Fe cation site. Position 383 (Glu-383) interacts with piceatannol. Glu-383 is a trans-resveratrol binding site. Position 510 (His-510) interacts with Fe cation.

It belongs to the carotenoid oxygenase family. It depends on Fe(2+) as a cofactor.

The enzyme catalyses trans-resveratrol + O2 = 3,5-dihydroxybenzaldehyde + 4-hydroxybenzaldehyde. It catalyses the reaction piceatannol + O2 = 3,5-dihydroxybenzaldehyde + 3,4-dihydroxybenzaldehyde. Functionally, dioxygenase that cleaves the interphenyl C-alpha-C-beta double bond of resveratrol to yield 3,5-dihydroxybenzaldehyde and 4-hydroxybenzaldehyde. Also cleaves piceatannol, a compound that differs from resveratrol only in the occurrence of an additional hydroxyl group, which leads to the production of 3,4-dihydroxybenzaldehyde and 3,5-hydroxybenzaldehyde. Is not able to cleave trans-stilbene, 4-monohydroxy-trans-stilbene, 3,5-dihydroxy-trans-stilbene (pinosylvin), trismethoxy-resveratrol, and 3,3',5-trihydroxy-4'-methoxystilbene-3-O-beta-D-glucoside. Is not involved in carotenoid metabolism. The protein is Carotenoid cleavage oxygenase 1 of Neurospora crassa (strain ATCC 24698 / 74-OR23-1A / CBS 708.71 / DSM 1257 / FGSC 987).